The sequence spans 224 residues: Histone H1.03 (224 aa).

Low complexity-rich tracts occupy residues 1–22 and 30–42; these read MAETAPVAAPDVAAAPTPAKAA and AAGGAKARKPAGP. 2 disordered regions span residues 1–43 and 99–224; these read MAET…AGPS and QTKG…PKKK. One can recognise an H15 domain in the interval 40–113; it reads AGPSVTELIT…GASGSFRLSK (74 aa). 4 stretches are compositionally biased toward basic residues: residues 122-137, 145-162, 170-188, and 197-224; these read APKKKTPAAKPKKPAA, KKPKKAVAVKKSPKKAKK, KAAKSPKKVTKAAKPKKAV, and KAVKPKAAKPKATKPKAAKAKKAAPKKK.

The protein belongs to the histone H1/H5 family.

It localises to the nucleus. It is found in the chromosome. In terms of biological role, histones H1 are necessary for the condensation of nucleosome chains into higher-order structures. This Gallus gallus (Chicken) protein is Histone H1.03.